The sequence spans 283 residues: Putative F-box protein At1g60370 (283 aa).

Residues 4–53 (GEKLESIPIDLIIEIHSRLPAESVARFRCVSKLWGSMFRRPYFTELFLTR) form the F-box domain.

The chain is Putative F-box protein At1g60370 from Arabidopsis thaliana (Mouse-ear cress).